The chain runs to 145 residues: D-aminoacyl-tRNA deacylase (145 aa).

Positions 137-138 match the Gly-cisPro motif, important for rejection of L-amino acids motif; sequence GP.

Belongs to the DTD family. In terms of assembly, homodimer.

It is found in the cytoplasm. It carries out the reaction glycyl-tRNA(Ala) + H2O = tRNA(Ala) + glycine + H(+). The catalysed reaction is a D-aminoacyl-tRNA + H2O = a tRNA + a D-alpha-amino acid + H(+). Its function is as follows. An aminoacyl-tRNA editing enzyme that deacylates mischarged D-aminoacyl-tRNAs. Also deacylates mischarged glycyl-tRNA(Ala), protecting cells against glycine mischarging by AlaRS. Acts via tRNA-based rather than protein-based catalysis; rejects L-amino acids rather than detecting D-amino acids in the active site. By recycling D-aminoacyl-tRNA to D-amino acids and free tRNA molecules, this enzyme counteracts the toxicity associated with the formation of D-aminoacyl-tRNA entities in vivo and helps enforce protein L-homochirality. The protein is D-aminoacyl-tRNA deacylase of Salmonella choleraesuis (strain SC-B67).